Reading from the N-terminus, the 78-residue chain is Acyl carrier protein (78 aa).

Residues 2 to 77 form the Carrier domain; sequence SEIASRVKAI…DAVSYIEANA (76 aa). S37 carries the post-translational modification O-(pantetheine 4'-phosphoryl)serine.

It belongs to the acyl carrier protein (ACP) family. In terms of processing, 4'-phosphopantetheine is transferred from CoA to a specific serine of apo-ACP by AcpS. This modification is essential for activity because fatty acids are bound in thioester linkage to the sulfhydryl of the prosthetic group.

The protein localises to the cytoplasm. The protein operates within lipid metabolism; fatty acid biosynthesis. Its function is as follows. Carrier of the growing fatty acid chain in fatty acid biosynthesis. The chain is Acyl carrier protein from Phocaeicola vulgatus (strain ATCC 8482 / DSM 1447 / JCM 5826 / CCUG 4940 / NBRC 14291 / NCTC 11154) (Bacteroides vulgatus).